A 192-amino-acid chain; its full sequence is Flavin prenyltransferase UbiX (192 aa).

Residues 10-12 (GAS), serine 36, 92-95 (SVAT), and arginine 127 contribute to the FMN site. Tyrosine 157 and lysine 173 together coordinate dimethylallyl phosphate.

Belongs to the UbiX/PAD1 family.

It carries out the reaction dimethylallyl phosphate + FMNH2 = prenylated FMNH2 + phosphate. Flavin prenyltransferase that catalyzes the synthesis of the prenylated FMN cofactor (prenyl-FMN) for 4-hydroxy-3-polyprenylbenzoic acid decarboxylase UbiD. The prenyltransferase is metal-independent and links a dimethylallyl moiety from dimethylallyl monophosphate (DMAP) to the flavin N5 and C6 atoms of FMN. The sequence is that of Flavin prenyltransferase UbiX from Chlamydia trachomatis serovar D (strain ATCC VR-885 / DSM 19411 / UW-3/Cx).